A 548-amino-acid chain; its full sequence is ATP synthase subunit alpha (548 aa).

172–179 (GDRKTGKT) is an ATP binding site.

This sequence belongs to the ATPase alpha/beta chains family. As to quaternary structure, F-type ATPases have 2 components, CF(1) - the catalytic core - and CF(0) - the membrane proton channel. CF(1) has five subunits: alpha(3), beta(3), gamma(1), delta(1), epsilon(1). CF(0) has three main subunits: a(1), b(2) and c(9-12). The alpha and beta chains form an alternating ring which encloses part of the gamma chain. CF(1) is attached to CF(0) by a central stalk formed by the gamma and epsilon chains, while a peripheral stalk is formed by the delta and b chains.

It is found in the cell membrane. The enzyme catalyses ATP + H2O + 4 H(+)(in) = ADP + phosphate + 5 H(+)(out). Its function is as follows. Produces ATP from ADP in the presence of a proton gradient across the membrane. The alpha chain is a regulatory subunit. This chain is ATP synthase subunit alpha, found in Mycolicibacterium smegmatis (strain ATCC 700084 / mc(2)155) (Mycobacterium smegmatis).